The following is a 1240-amino-acid chain: Selection and upkeep of intraepithelial T-cells protein 6 (1240 aa).

The N-terminal stretch at 1-24 (MGTIGVPLTAHCVVLFLLQMVALS) is a signal peptide. Residues 25 to 1086 (TEQFTVNGLE…CNKRNPFWKK (1062 aa)) are Extracellular-facing. Residues 26–141 (EQFTVNGLES…EEHIIEVKVT (116 aa)) form the Ig-like V-type domain. Cysteine 49 and cysteine 123 are joined by a disulfide. In terms of domain architecture, Ig-like C1-type spans 142–231 (ATSSDIQILM…FVTHQEESIS (90 aa)). Asparagine 155, asparagine 200, and asparagine 314 each carry an N-linked (GlcNAc...) asparagine glycan. An intrachain disulfide couples cysteine 163 to cysteine 217. Residues 1087–1107 (HALDLGISVFAIIVVTLIRHL) traverse the membrane as a helical segment. The Cytoplasmic segment spans residues 1108 to 1125 (NQREADQHFELDTLWSKD). The helical transmembrane segment at 1126 to 1146 (TSVILCVLIMFNNRLKALIYF) threads the bilayer. Topologically, residues 1147–1167 (RLYGYSPPGKTYKYIVNYILR) are extracellular. Residues 1168 to 1188 (FSQPLFFIVYSAIILVMHLQI) form a helical membrane-spanning segment. Residues 1189–1205 (QNTDSLFSLYNSWMVEM) are Cytoplasmic-facing. Residues 1206 to 1226 (IMVLGLLLAIFNVKNIATALL) traverse the membrane as a helical segment. Topologically, residues 1227–1240 (HLGRTTLRLFRIKD) are extracellular.

This sequence belongs to the SKINT family. In terms of tissue distribution, expressed in skin.

It is found in the membrane. May act by engaging a cell surface molecule on immature T-cells in the embryonic thymus. In Mus musculus (Mouse), this protein is Selection and upkeep of intraepithelial T-cells protein 6 (Skint6).